Here is a 122-residue protein sequence, read N- to C-terminus: Holo-[acyl-carrier-protein] synthase (122 aa).

Residues aspartate 8 and glutamate 56 each contribute to the Mg(2+) site.

The protein belongs to the P-Pant transferase superfamily. AcpS family. Mg(2+) serves as cofactor.

The protein resides in the cytoplasm. It catalyses the reaction apo-[ACP] + CoA = holo-[ACP] + adenosine 3',5'-bisphosphate + H(+). In terms of biological role, transfers the 4'-phosphopantetheine moiety from coenzyme A to a Ser of acyl-carrier-protein. This Streptomyces griseus subsp. griseus (strain JCM 4626 / CBS 651.72 / NBRC 13350 / KCC S-0626 / ISP 5235) protein is Holo-[acyl-carrier-protein] synthase.